The chain runs to 311 residues: Porphobilinogen deaminase (311 aa).

Position 242 is an S-(dipyrrolylmethanemethyl)cysteine (cysteine 242).

It belongs to the HMBS family. Monomer. The cofactor is dipyrromethane.

The catalysed reaction is 4 porphobilinogen + H2O = hydroxymethylbilane + 4 NH4(+). The protein operates within porphyrin-containing compound metabolism; protoporphyrin-IX biosynthesis; coproporphyrinogen-III from 5-aminolevulinate: step 2/4. In terms of biological role, tetrapolymerization of the monopyrrole PBG into the hydroxymethylbilane pre-uroporphyrinogen in several discrete steps. This Hahella chejuensis (strain KCTC 2396) protein is Porphobilinogen deaminase.